The chain runs to 347 residues: DNA-directed RNA polymerase subunit alpha (347 aa).

The segment at 1-243 (MLIKQGDRLI…DQISVFINFD (243 aa)) is alpha N-terminal domain (alpha-NTD). The alpha C-terminal domain (alpha-CTD) stretch occupies residues 260–347 (VNENLFKGID…EWKRKQQNEA (88 aa)).

Belongs to the RNA polymerase alpha chain family. In terms of assembly, homodimer. The RNAP catalytic core consists of 2 alpha, 1 beta, 1 beta' and 1 omega subunit. When a sigma factor is associated with the core the holoenzyme is formed, which can initiate transcription.

It carries out the reaction RNA(n) + a ribonucleoside 5'-triphosphate = RNA(n+1) + diphosphate. In terms of biological role, DNA-dependent RNA polymerase catalyzes the transcription of DNA into RNA using the four ribonucleoside triphosphates as substrates. The chain is DNA-directed RNA polymerase subunit alpha from Nitratidesulfovibrio vulgaris (strain DSM 19637 / Miyazaki F) (Desulfovibrio vulgaris).